The chain runs to 345 residues: ATP-dependent (S)-NAD(P)H-hydrate dehydratase (345 aa).

The 324-residue stretch at Ile9–Val332 folds into the YjeF C-terminal domain. Residues Gly113 and Asn170–Arg176 contribute to the (6S)-NADPHX site. ATP contacts are provided by residues Lys208–Asp212 and Gly241–Gly250. Asp251 provides a ligand contact to (6S)-NADPHX.

It belongs to the NnrD/CARKD family. The cofactor is Mg(2+).

The protein localises to the cytoplasm. It carries out the reaction (6S)-NADHX + ATP = ADP + phosphate + NADH + H(+). The enzyme catalyses (6S)-NADPHX + ATP = ADP + phosphate + NADPH + H(+). In terms of biological role, catalyzes the dehydration of the S-form of NAD(P)HX at the expense of ATP, which is converted to ADP. Together with NAD(P)HX epimerase, which catalyzes the epimerization of the S- and R-forms, the enzyme allows the repair of both epimers of NAD(P)HX, a damaged form of NAD(P)H that is a result of enzymatic or heat-dependent hydration. The chain is ATP-dependent (S)-NAD(P)H-hydrate dehydratase from Cryptococcus neoformans var. neoformans serotype D (strain JEC21 / ATCC MYA-565) (Filobasidiella neoformans).